A 692-amino-acid polypeptide reads, in one-letter code: Elongation factor G (692 aa).

One can recognise a tr-type G domain in the interval 8–282; it reads DKTRNIGIMA…AVLDYLPAPT (275 aa). GTP contacts are provided by residues 17 to 24, 81 to 85, and 135 to 138; these read AHIDAGKT, DTPGH, and NKMD.

Belongs to the TRAFAC class translation factor GTPase superfamily. Classic translation factor GTPase family. EF-G/EF-2 subfamily.

It localises to the cytoplasm. In terms of biological role, catalyzes the GTP-dependent ribosomal translocation step during translation elongation. During this step, the ribosome changes from the pre-translocational (PRE) to the post-translocational (POST) state as the newly formed A-site-bound peptidyl-tRNA and P-site-bound deacylated tRNA move to the P and E sites, respectively. Catalyzes the coordinated movement of the two tRNA molecules, the mRNA and conformational changes in the ribosome. This Bacillus pumilus (strain SAFR-032) protein is Elongation factor G.